The following is a 172-amino-acid chain: Translocator protein 2 (172 aa).

5 consecutive transmembrane segments (helical) span residues 3 to 23 (PQGA…SLLT), 45 to 65 (VLLA…YLVW), 80 to 100 (LGLY…FFAA), 104 to 124 (GLAL…ALIW), and 130 to 150 (LAAV…SIAY).

This sequence belongs to the TspO/BZRP family. In terms of assembly, homotetramer. May also form homodimer. Expressed in erythrocytes (at protein level).

It is found in the endoplasmic reticulum membrane. It localises to the cell membrane. In terms of biological role, cholesterol-binding protein involved in the redistribution of cholesterol from lipid droplets to the endoplasmic reticulum. Required to meet cholesterol demands during erythropoietic differentiation. May play a role in transport processes at the plasma membrane of erythrocytes, including regulating VDAC-mediated ATP export, and import of the heme precursors protoporphyrin IX and 5-aminolevulinic acid. The protein is Translocator protein 2 of Canis lupus familiaris (Dog).